The primary structure comprises 402 residues: 1-deoxy-D-xylulose 5-phosphate reductoisomerase (402 aa).

NADPH-binding residues include T13, G14, S15, I16, and N126. Position 127 (K127) interacts with 1-deoxy-D-xylulose 5-phosphate. Residue E128 coordinates NADPH. D152 lines the Mn(2+) pocket. S153, E154, S188, and H211 together coordinate 1-deoxy-D-xylulose 5-phosphate. Position 154 (E154) interacts with Mn(2+). Position 217 (G217) interacts with NADPH. S224, N229, K230, and E233 together coordinate 1-deoxy-D-xylulose 5-phosphate. Position 233 (E233) interacts with Mn(2+).

The protein belongs to the DXR family. Mg(2+) is required as a cofactor. Mn(2+) serves as cofactor.

It catalyses the reaction 2-C-methyl-D-erythritol 4-phosphate + NADP(+) = 1-deoxy-D-xylulose 5-phosphate + NADPH + H(+). Its pathway is isoprenoid biosynthesis; isopentenyl diphosphate biosynthesis via DXP pathway; isopentenyl diphosphate from 1-deoxy-D-xylulose 5-phosphate: step 1/6. Functionally, catalyzes the NADPH-dependent rearrangement and reduction of 1-deoxy-D-xylulose-5-phosphate (DXP) to 2-C-methyl-D-erythritol 4-phosphate (MEP). This Psychrobacter cryohalolentis (strain ATCC BAA-1226 / DSM 17306 / VKM B-2378 / K5) protein is 1-deoxy-D-xylulose 5-phosphate reductoisomerase.